Consider the following 286-residue polypeptide: Polyamine aminopropyltransferase (286 aa).

The region spanning T5–D238 is the PABS domain. Residue Q33 coordinates S-methyl-5'-thioadenosine. H64 and D88 together coordinate spermidine. Residues E108 and D140–G141 contribute to the S-methyl-5'-thioadenosine site. The active-site Proton acceptor is D158. A spermidine-binding site is contributed by D158 to D161. P165 lines the S-methyl-5'-thioadenosine pocket.

The protein belongs to the spermidine/spermine synthase family. As to quaternary structure, homodimer or homotetramer.

It is found in the cytoplasm. It carries out the reaction S-adenosyl 3-(methylsulfanyl)propylamine + putrescine = S-methyl-5'-thioadenosine + spermidine + H(+). The protein operates within amine and polyamine biosynthesis; spermidine biosynthesis; spermidine from putrescine: step 1/1. Functionally, catalyzes the irreversible transfer of a propylamine group from the amino donor S-adenosylmethioninamine (decarboxy-AdoMet) to putrescine (1,4-diaminobutane) to yield spermidine. The chain is Polyamine aminopropyltransferase from Salmonella arizonae (strain ATCC BAA-731 / CDC346-86 / RSK2980).